A 340-amino-acid chain; its full sequence is Delta(1)-pyrroline-2-carboxylate reductase 2 (340 aa).

The active-site Charge relay system is the S50. The Proton donor role is filled by H51. R55 contacts substrate. 123 to 127 provides a ligand contact to NADP(+); sequence HFSAL. T163 lines the substrate pocket. Position 181-183 (181-183) interacts with NADP(+); the sequence is DFA. Residue 189–190 participates in substrate binding; sequence RG. Residue D191 is the Charge relay system of the active site. Residues 232–233 and 307–313 each bind NADP(+); these read HK and RLPSQRR.

The protein belongs to the LDH2/MDH2 oxidoreductase family. Homodimer.

The catalysed reaction is L-proline + NAD(+) = 1-pyrroline-2-carboxylate + NADH + H(+). The enzyme catalyses L-proline + NADP(+) = 1-pyrroline-2-carboxylate + NADPH + H(+). In terms of biological role, catalyzes the reduction of Delta(1)-pyrroline-2-carboxylate (Pyr2C) to L-proline, using NADPH as the electron donor. May be involved in a degradation pathway that converts trans-3-hydroxy-L-proline (t3LHyp) to L-proline. The protein is Delta(1)-pyrroline-2-carboxylate reductase 2 of Burkholderia multivorans (strain ATCC 17616 / 249).